Here is a 101-residue protein sequence, read N- to C-terminus: NADH-quinone oxidoreductase subunit K (101 aa).

Helical transmembrane passes span 5–25, 30–50, and 61–81; these read LTHY…GIIL, IVIL…LVAF, and VLVF…LALI.

It belongs to the complex I subunit 4L family. NDH-1 is composed of 14 different subunits. Subunits NuoA, H, J, K, L, M, N constitute the membrane sector of the complex.

The protein localises to the cell inner membrane. It carries out the reaction a quinone + NADH + 5 H(+)(in) = a quinol + NAD(+) + 4 H(+)(out). NDH-1 shuttles electrons from NADH, via FMN and iron-sulfur (Fe-S) centers, to quinones in the respiratory chain. The immediate electron acceptor for the enzyme in this species is believed to be ubiquinone. Couples the redox reaction to proton translocation (for every two electrons transferred, four hydrogen ions are translocated across the cytoplasmic membrane), and thus conserves the redox energy in a proton gradient. The sequence is that of NADH-quinone oxidoreductase subunit K from Methylacidiphilum infernorum (isolate V4) (Methylokorus infernorum (strain V4)).